Here is a 295-residue protein sequence, read N- to C-terminus: Acetyl-coenzyme A carboxylase carboxyl transferase subunit beta (295 aa).

Positions 1 to 20 (MSWLSKLMPSGIRTENTPAK) are disordered. The 268-residue stretch at 28–295 (LWEKCSNCGS…QPHPQDADAA (268 aa)) folds into the CoA carboxyltransferase N-terminal domain. Residues Cys-32, Cys-35, Cys-51, and Cys-54 each contribute to the Zn(2+) site. Residues 32–54 (CSNCGSALYGPELEENLEVCPKC) form a C4-type zinc finger.

Belongs to the AccD/PCCB family. Acetyl-CoA carboxylase is a heterohexamer composed of biotin carboxyl carrier protein (AccB), biotin carboxylase (AccC) and two subunits each of ACCase subunit alpha (AccA) and ACCase subunit beta (AccD). It depends on Zn(2+) as a cofactor.

It is found in the cytoplasm. It carries out the reaction N(6)-carboxybiotinyl-L-lysyl-[protein] + acetyl-CoA = N(6)-biotinyl-L-lysyl-[protein] + malonyl-CoA. Its pathway is lipid metabolism; malonyl-CoA biosynthesis; malonyl-CoA from acetyl-CoA: step 1/1. Functionally, component of the acetyl coenzyme A carboxylase (ACC) complex. Biotin carboxylase (BC) catalyzes the carboxylation of biotin on its carrier protein (BCCP) and then the CO(2) group is transferred by the transcarboxylase to acetyl-CoA to form malonyl-CoA. In Xanthomonas campestris pv. campestris (strain B100), this protein is Acetyl-coenzyme A carboxylase carboxyl transferase subunit beta.